Reading from the N-terminus, the 703-residue chain is Zinc finger protein 750 (703 aa).

The segment at 25–51 (YKCFQCPFTCNEKSHLFNHMKYGLCKN) adopts a CCHC-type zinc-finger fold. Cysteine 27, cysteine 30, histidine 43, and cysteine 49 together coordinate Zn(2+). 4 disordered regions span residues 64–113 (KCPK…DAKE), 350–527 (PASS…YGPM), 553–614 (WAPR…KQTA), and 630–703 (RVAD…TRVS). Polar residues predominate over residues 67–106 (KSSSLDPKQTHQPEPTSKPATSKSLLNGLSSFDPKSQQGS). Positions 352 to 361 (SSPSELNLSS) are enriched in low complexity. The span at 367–394 (TECEKGSPVPEAKDPSKDGQRDAEEAKM) shows a compositional bias: basic and acidic residues. Composition is skewed to polar residues over residues 410–421 (SPTNFTQTSQTF) and 456–477 (GSESPHSQPPANRTESPKSLQA). Positions 574-611 (TETKGSEDRTSRVETPQDKAHSRTTPDVHTEDSSDEQK) are enriched in basic and acidic residues. Residues 639-655 (QEPTRQDVPTLSATENL) show a composition bias toward polar residues.

The protein localises to the nucleus. Its function is as follows. Transcription factor involved in epidermis differentiation. Required for terminal epidermal differentiation: acts downstream of p63/TP63 and activates expression of late epidermal differentiation genes. Specifically binds to the promoter of KLF4 and promotes its expression. This is Zinc finger protein 750 (Znf750) from Mus musculus (Mouse).